Reading from the N-terminus, the 210-residue chain is Ribosomal RNA small subunit methyltransferase G (210 aa).

Residues Gly-76, Leu-81, 127-128 (VE), and Arg-142 contribute to the S-adenosyl-L-methionine site.

Belongs to the methyltransferase superfamily. RNA methyltransferase RsmG family.

The protein resides in the cytoplasm. The enzyme catalyses guanosine(527) in 16S rRNA + S-adenosyl-L-methionine = N(7)-methylguanosine(527) in 16S rRNA + S-adenosyl-L-homocysteine. Its function is as follows. Specifically methylates the N7 position of guanine in position 527 of 16S rRNA. The chain is Ribosomal RNA small subunit methyltransferase G from Vibrio cholerae serotype O1 (strain ATCC 39315 / El Tor Inaba N16961).